Reading from the N-terminus, the 192-residue chain is Orotate phosphoribosyltransferase (192 aa).

116-124 (EDIVTTGLS) provides a ligand contact to 5-phospho-alpha-D-ribose 1-diphosphate. Threonine 120 and arginine 148 together coordinate orotate.

This sequence belongs to the purine/pyrimidine phosphoribosyltransferase family. PyrE subfamily. As to quaternary structure, homodimer. Mg(2+) serves as cofactor.

The enzyme catalyses orotidine 5'-phosphate + diphosphate = orotate + 5-phospho-alpha-D-ribose 1-diphosphate. Its pathway is pyrimidine metabolism; UMP biosynthesis via de novo pathway; UMP from orotate: step 1/2. Functionally, catalyzes the transfer of a ribosyl phosphate group from 5-phosphoribose 1-diphosphate to orotate, leading to the formation of orotidine monophosphate (OMP). The sequence is that of Orotate phosphoribosyltransferase from Brucella abortus (strain S19).